Consider the following 1103-residue polypeptide: Ataxin-2 homolog (1103 aa).

Residues 1-10 (MSQSKDKKKF) show a composition bias toward basic residues. The segment at 1–75 (MSQSKDKKKF…QQQQQQQQPF (75 aa)) is disordered. The span at 11 to 28 (VGGGGGGGGNNSGGGGYG) shows a compositional bias: gly residues. Low complexity-rich tracts occupy residues 33–44 (NNNNNNRNSSNN) and 56–73 (HHQQ…QQQQ). A Sm domain is found at 84–166 (RTVFMSMSLV…FLQITATGVV (83 aa)). Residues 258-287 (EFYKINQSVAEKKAQEIENEKSGNIHLLEE) adopt a coiled-coil conformation. 5 disordered regions span residues 305–474 (VVRK…RESP), 516–557 (TNKS…APKS), 615–763 (LVIK…NNTT), 901–920 (HTMK…VQPQ), and 930–1103 (QPQG…NQYH). The segment covering 312 to 356 (PTSTTSTTTSPPTQNPTPSSSVYIPPSKRNNNNNTPSTPSVTSPP) has biased composition (low complexity). Residues 358–371 (VDKKHQQTHQDKKQ) show a composition bias toward basic and acidic residues. Residues 366–403 (HQDKKQTQQQQQQQQQQQQQQQQQQQQQQQQQQQQQTQ) are a coiled coil. Positions 372 to 463 (TQQQQQQQQQ…NNTPTATNTN (92 aa)) are enriched in low complexity. Over residues 516 to 529 (TNKSMNKSGSNIST) the composition is skewed to polar residues. Low complexity-rich tracts occupy residues 530–544 (TPVN…NGTP), 637–676 (PTQL…TPST), and 683–694 (TTTPITTTILTE). Residues 691 to 730 (ILTENKSDDKEKEKEKEKEKVDEKEKEKEKEKSDEKDKDQ) are a coiled coil. Basic and acidic residues predominate over residues 695–741 (NKSDDKEKEKEKEKEKVDEKEKEKEKEKSDEKDKDQSSTLVEKKDES). The segment covering 742-763 (SSSSNTTTTTTNTTNNNNNNTT) has biased composition (low complexity). The span at 930 to 957 (QPQGGVVQPSAGGAPKTMYQQQQQQQQQ) shows a compositional bias: low complexity. A compositionally biased stretch (gly residues) spans 960 to 969 (QPGGPMGVQR). Residues 974–984 (PPQQQPQQQQQ) are compositionally biased toward low complexity. Positions 1020 to 1031 (YAVPHPQYPMPP) are enriched in pro residues. The span at 1062–1076 (QVVSQNSPQQDSPSN) shows a compositional bias: low complexity.

Belongs to the ataxin-2 family.

The sequence is that of Ataxin-2 homolog (atxn2) from Dictyostelium discoideum (Social amoeba).